The chain runs to 421 residues: Synaptotagmin-12 (421 aa).

Over 1 to 18 the chain is Vesicular; sequence MAVDVAEYHLSVIKSPPG. The helical transmembrane segment at 19-39 threads the bilayer; the sequence is WEVGVYAAGALALLGIAAVSL. Residues 40 to 421 lie on the Cytoplasmic side of the membrane; the sequence is WKLWTSGSFP…VSMWHAVRRN (382 aa). A phosphoserine mark is found at serine 97, serine 99, and serine 214. C2 domains are found at residues 152-272 and 283-416; these read TLGQ…SGWL and AVGE…SMWH.

Belongs to the synaptotagmin family. In terms of assembly, homodimer. Can also form heterodimers. Interacts with SYT1. Post-translationally, phosphorylation of Ser-97 is required for mossy-fiber long-term potentiation.

The protein localises to the cytoplasmic vesicle. Its subcellular location is the secretory vesicle. It is found in the synaptic vesicle membrane. In terms of biological role, synaptic vesicle phosphoprotein that enhances spontaneous neurotransmitter release but does not effect induced neurotransmitter release. Unlike other synaptotagmins, it does not bind Ca(2+) or phospholipids. Essential for mossy-fiber long-term potentiation in the hippocampus. The protein is Synaptotagmin-12 (SYT12) of Homo sapiens (Human).